The sequence spans 426 residues: Amino acid transporter AVT1H (426 aa).

11 helical membrane passes run 34–54 (SFLHSVINMVGMLIGLGQLSM), 55–75 (PYAVESGGWMSIFLLISFGIL), 110–130 (LIVCLFIYLEIFMALVSYTIS), 148–168 (HFPAAKLTAVAVAIALPSLWI), 182–202 (ILMSAIIFGSVVYTAIFGGVI), 215–235 (IPTVSGIYLFSFGGHIVFPNL), 248–268 (VSIVSFATVTALYGALAITGA), 292–312 (IALWATVLTPMTKYALEFAPL), 340–360 (LLLVILALALTVPYFGYVLSL), 363–383 (SLVSVTIAVTLPSAFYLKICW), and 392–412 (AANLGFVVLGCVLGVLGSFES).

The protein belongs to the amino acid/polyamine transporter 2 family. Amino acid/auxin permease (AAAP) (TC 2.A.18.5) subfamily.

It is found in the membrane. This chain is Amino acid transporter AVT1H, found in Arabidopsis thaliana (Mouse-ear cress).